The sequence spans 162 residues: NADH-quinone oxidoreductase subunit I (162 aa).

2 4Fe-4S ferredoxin-type domains span residues 53–83 (LRRYPNGEERCIACKLCEAVCPALAITIDSA) and 93–122 (TRYDIDLFKCIFCGFCEESCPVDSIVETHI). The [4Fe-4S] cluster site is built by C63, C66, C69, C73, C102, C105, C108, and C112.

The protein belongs to the complex I 23 kDa subunit family. In terms of assembly, NDH-1 is composed of 14 different subunits. Subunits NuoA, H, J, K, L, M, N constitute the membrane sector of the complex. [4Fe-4S] cluster is required as a cofactor.

Its subcellular location is the cell inner membrane. It catalyses the reaction a quinone + NADH + 5 H(+)(in) = a quinol + NAD(+) + 4 H(+)(out). Its function is as follows. NDH-1 shuttles electrons from NADH, via FMN and iron-sulfur (Fe-S) centers, to quinones in the respiratory chain. The immediate electron acceptor for the enzyme in this species is believed to be ubiquinone. Couples the redox reaction to proton translocation (for every two electrons transferred, four hydrogen ions are translocated across the cytoplasmic membrane), and thus conserves the redox energy in a proton gradient. The polypeptide is NADH-quinone oxidoreductase subunit I (Xanthomonas oryzae pv. oryzae (strain MAFF 311018)).